Consider the following 162-residue polypeptide: NADH-quinone oxidoreductase subunit I (162 aa).

4Fe-4S ferredoxin-type domains are found at residues 53–83 (LRRY…IEAE) and 93–122 (TRYD…EGPN). [4Fe-4S] cluster-binding residues include C63, C66, C69, C73, C102, C105, C108, and C112.

It belongs to the complex I 23 kDa subunit family. As to quaternary structure, NDH-1 is composed of 14 different subunits. Subunits NuoA, H, J, K, L, M, N constitute the membrane sector of the complex. It depends on [4Fe-4S] cluster as a cofactor.

Its subcellular location is the cell inner membrane. It catalyses the reaction a quinone + NADH + 5 H(+)(in) = a quinol + NAD(+) + 4 H(+)(out). In terms of biological role, NDH-1 shuttles electrons from NADH, via FMN and iron-sulfur (Fe-S) centers, to quinones in the respiratory chain. The immediate electron acceptor for the enzyme in this species is believed to be ubiquinone. Couples the redox reaction to proton translocation (for every two electrons transferred, four hydrogen ions are translocated across the cytoplasmic membrane), and thus conserves the redox energy in a proton gradient. This chain is NADH-quinone oxidoreductase subunit I, found in Rhodospirillum rubrum (strain ATCC 11170 / ATH 1.1.1 / DSM 467 / LMG 4362 / NCIMB 8255 / S1).